The chain runs to 205 residues: Holliday junction branch migration complex subunit RuvA (205 aa).

Residues 1-64 (MIGKLKGVID…EDMIRLYGFA (64 aa)) form a domain I region. Positions 65–143 (NQLEREWFRL…AFAGDASGTI (79 aa)) are domain II. The interval 144 to 152 (GLKQELGAG) is flexible linker. The segment at 153–205 (AAPAPVADAVSALSNLGYSRDQAANAVAAALKEAGENADSAKLIRLGLKELSR) is domain III.

It belongs to the RuvA family. Homotetramer. Forms an RuvA(8)-RuvB(12)-Holliday junction (HJ) complex. HJ DNA is sandwiched between 2 RuvA tetramers; dsDNA enters through RuvA and exits via RuvB. An RuvB hexamer assembles on each DNA strand where it exits the tetramer. Each RuvB hexamer is contacted by two RuvA subunits (via domain III) on 2 adjacent RuvB subunits; this complex drives branch migration. In the full resolvosome a probable DNA-RuvA(4)-RuvB(12)-RuvC(2) complex forms which resolves the HJ.

It is found in the cytoplasm. In terms of biological role, the RuvA-RuvB-RuvC complex processes Holliday junction (HJ) DNA during genetic recombination and DNA repair, while the RuvA-RuvB complex plays an important role in the rescue of blocked DNA replication forks via replication fork reversal (RFR). RuvA specifically binds to HJ cruciform DNA, conferring on it an open structure. The RuvB hexamer acts as an ATP-dependent pump, pulling dsDNA into and through the RuvAB complex. HJ branch migration allows RuvC to scan DNA until it finds its consensus sequence, where it cleaves and resolves the cruciform DNA. The sequence is that of Holliday junction branch migration complex subunit RuvA from Brucella anthropi (strain ATCC 49188 / DSM 6882 / CCUG 24695 / JCM 21032 / LMG 3331 / NBRC 15819 / NCTC 12168 / Alc 37) (Ochrobactrum anthropi).